The primary structure comprises 87 residues: U3-theraphotoxin-Hhn1n (87 aa).

The first 24 residues, 1 to 24 (MVNMKASMFLTFAGLVLLFVVCYA), serve as a signal peptide directing secretion. Positions 25–52 (SESEEKEFPKEMLSSIFAVDNDFKQEER) are excised as a propeptide. Cystine bridges form between Cys-54–Cys-67, Cys-61–Cys-72, and Cys-66–Cys-79.

It belongs to the neurotoxin 10 (Hwtx-1) family. 51 (Hntx-8) subfamily. Hntx-8 sub-subfamily. In terms of tissue distribution, expressed by the venom gland.

The protein resides in the secreted. Its function is as follows. Weakly inhibits Kv11.1/KCNH2/ERG1, Kv1.2/KCNA2, Kv1.3/KCNA3, and Kv2.1/KCNB1. The protein is U3-theraphotoxin-Hhn1n of Cyriopagopus hainanus (Chinese bird spider).